The primary structure comprises 196 residues: Imidazoleglycerol-phosphate dehydratase (196 aa).

The protein belongs to the imidazoleglycerol-phosphate dehydratase family.

The protein localises to the cytoplasm. It carries out the reaction D-erythro-1-(imidazol-4-yl)glycerol 3-phosphate = 3-(imidazol-4-yl)-2-oxopropyl phosphate + H2O. Its pathway is amino-acid biosynthesis; L-histidine biosynthesis; L-histidine from 5-phospho-alpha-D-ribose 1-diphosphate: step 6/9. The protein is Imidazoleglycerol-phosphate dehydratase of Zymomonas mobilis subsp. mobilis (strain ATCC 31821 / ZM4 / CP4).